The sequence spans 81 residues: MLVLTRKVGESIRISDDIVVKVIDIGKNRIRIGIDAPSTVSVLRNEVYEEIHQENILSSRGSVTDLAKAATLWARKSKKEE.

Belongs to the CsrA/RsmA family. As to quaternary structure, homodimer; the beta-strands of each monomer intercalate to form a hydrophobic core, while the alpha-helices form wings that extend away from the core.

The protein resides in the cytoplasm. Functionally, a translational regulator that binds mRNA to regulate translation initiation and/or mRNA stability. Usually binds in the 5'-UTR at or near the Shine-Dalgarno sequence preventing ribosome-binding, thus repressing translation. Its main target seems to be the major flagellin gene, while its function is anatagonized by FliW. The chain is Translational regulator CsrA from Desulforapulum autotrophicum (strain ATCC 43914 / DSM 3382 / VKM B-1955 / HRM2) (Desulfobacterium autotrophicum).